We begin with the raw amino-acid sequence, 395 residues long: Zinc-regulated GTPase metalloprotein activator 1E (395 aa).

Residues 1–22 (MLPAVGSVDEEEDPAEEDCPEL) are disordered. Positions 8-20 (VDEEEDPAEEDCP) are enriched in acidic residues. The psi-PxLVp motif motif lies at 17–24 (EDCPELVP). 49-56 (GYLGAGKT) provides a ligand contact to GTP. Zn(2+)-binding residues include Cys-107, Cys-109, and Cys-110. A CXCC motif motif is present at residues 107–110 (CLCC). Residues 110-114 (CSVKD) and 203-206 (NKTD) each bind GTP. Residues 274 to 377 (IVTITFEVPG…ILKQLFIATV (104 aa)) form the CobW C-terminal domain.

Belongs to the SIMIBI class G3E GTPase family. ZNG1 subfamily.

The protein resides in the nucleus. The enzyme catalyses GTP + H2O = GDP + phosphate + H(+). Its function is as follows. Zinc chaperone that directly transfers zinc cofactor to target metalloproteins, thereby activating them. Catalyzes zinc insertion into the active site of methionine aminopeptidase METAP1, which function to cleave the initiator methionine from polypeptides during or after protein translation. Mechanistically, the N-terminal psi-PxLVp motif binds to the C6H2-type zinc finger of inactive form of METAP1. After formation of the docked complex, zinc is transferred from the CXCC motif in the GTPase domain of ZNG1E to the zinc binding site in the peptidase domain of METAP1 in a process requiring GTP hydrolysis. GTP/GDP exchange is required for release of active METAP1. This chain is Zinc-regulated GTPase metalloprotein activator 1E, found in Homo sapiens (Human).